The primary structure comprises 233 residues: Histone H1-I (233 aa).

2 disordered regions span residues 1-55 (MSDS…HPPV) and 115-233 (TGAS…KKSK). The segment covering 17–29 (KAASPAKSPAKSP) has biased composition (low complexity). The H15 domain occupies 51 to 125 (THPPVSEMVV…GASGSFKMPP (75 aa)). Basic and acidic residues-rich tracts occupy residues 128 to 137 (KKVDRPESAP) and 146 to 155 (TRVERKEKKV). Basic residues-rich tracts occupy residues 172 to 213 (AAKK…KPTP) and 223 to 233 (AAARKPAKKSK).

The protein belongs to the histone H1/H5 family.

Its subcellular location is the nucleus. The protein localises to the chromosome. Histones H1 are necessary for the condensation of nucleosome chains into higher-order structures. This Glyptotendipes barbipes (Midge) protein is Histone H1-I.